The primary structure comprises 322 residues: N-acetyl-gamma-glutamyl-phosphate reductase 2 (322 aa).

The active site involves C117.

It belongs to the NAGSA dehydrogenase family. Type 2 subfamily.

The protein localises to the cytoplasm. It catalyses the reaction N-acetyl-L-glutamate 5-semialdehyde + phosphate + NADP(+) = N-acetyl-L-glutamyl 5-phosphate + NADPH + H(+). It functions in the pathway amino-acid biosynthesis; L-arginine biosynthesis; N(2)-acetyl-L-ornithine from L-glutamate: step 3/4. In terms of biological role, catalyzes the NADPH-dependent reduction of N-acetyl-5-glutamyl phosphate to yield N-acetyl-L-glutamate 5-semialdehyde. The chain is N-acetyl-gamma-glutamyl-phosphate reductase 2 from Nostoc sp. (strain PCC 7120 / SAG 25.82 / UTEX 2576).